Consider the following 332-residue polypeptide: Beta-ketoacyl-[acyl-carrier-protein] synthase III (332 aa).

Active-site residues include Cys-112 and His-252. Positions 253-257 (QANLR) are ACP-binding. Asn-282 is an active-site residue.

This sequence belongs to the thiolase-like superfamily. FabH family. As to quaternary structure, homodimer.

The protein resides in the cytoplasm. It carries out the reaction malonyl-[ACP] + acetyl-CoA + H(+) = 3-oxobutanoyl-[ACP] + CO2 + CoA. The protein operates within lipid metabolism; fatty acid biosynthesis. Functionally, catalyzes the condensation reaction of fatty acid synthesis by the addition to an acyl acceptor of two carbons from malonyl-ACP. Catalyzes the first condensation reaction which initiates fatty acid synthesis and may therefore play a role in governing the total rate of fatty acid production. Possesses both acetoacetyl-ACP synthase and acetyl transacylase activities. Its substrate specificity determines the biosynthesis of branched-chain and/or straight-chain of fatty acids. In Syntrophomonas wolfei subsp. wolfei (strain DSM 2245B / Goettingen), this protein is Beta-ketoacyl-[acyl-carrier-protein] synthase III.